A 317-amino-acid polypeptide reads, in one-letter code: Methionyl-tRNA formyltransferase (317 aa).

113–116 is a (6S)-5,6,7,8-tetrahydrofolate binding site; that stretch reads SLLP.

It belongs to the Fmt family.

It carries out the reaction L-methionyl-tRNA(fMet) + (6R)-10-formyltetrahydrofolate = N-formyl-L-methionyl-tRNA(fMet) + (6S)-5,6,7,8-tetrahydrofolate + H(+). Its function is as follows. Attaches a formyl group to the free amino group of methionyl-tRNA(fMet). The formyl group appears to play a dual role in the initiator identity of N-formylmethionyl-tRNA by promoting its recognition by IF2 and preventing the misappropriation of this tRNA by the elongation apparatus. This is Methionyl-tRNA formyltransferase from Pseudomonas fluorescens (strain SBW25).